We begin with the raw amino-acid sequence, 187 residues long: GTP cyclohydrolase 1 (187 aa).

Zn(2+)-binding residues include Cys79, His82, and Cys150.

This sequence belongs to the GTP cyclohydrolase I family. As to quaternary structure, toroid-shaped homodecamer, composed of two pentamers of five dimers.

The enzyme catalyses GTP + H2O = 7,8-dihydroneopterin 3'-triphosphate + formate + H(+). The protein operates within cofactor biosynthesis; 7,8-dihydroneopterin triphosphate biosynthesis; 7,8-dihydroneopterin triphosphate from GTP: step 1/1. This is GTP cyclohydrolase 1 from Fusobacterium nucleatum subsp. nucleatum (strain ATCC 25586 / DSM 15643 / BCRC 10681 / CIP 101130 / JCM 8532 / KCTC 2640 / LMG 13131 / VPI 4355).